The chain runs to 158 residues: Acetolactate synthase small subunit (158 aa).

The ACT domain occupies 4–78 (ILSVLLENES…DVLRVIKVGQ (75 aa)).

Belongs to the acetolactate synthase small subunit family. Dimer of large and small chains.

It carries out the reaction 2 pyruvate + H(+) = (2S)-2-acetolactate + CO2. It functions in the pathway amino-acid biosynthesis; L-isoleucine biosynthesis; L-isoleucine from 2-oxobutanoate: step 1/4. It participates in amino-acid biosynthesis; L-valine biosynthesis; L-valine from pyruvate: step 1/4. This chain is Acetolactate synthase small subunit (ilvH), found in Buchnera aphidicola subsp. Schizaphis graminum (strain Sg).